We begin with the raw amino-acid sequence, 350 residues long: MSDQKKMTYKDAGVDIDAGNRFVQLIKPLVKATSRPEVLTDIGGFGGLFSLHADKYKKPTLVASTDGVGTKLKLAFMMDKHDTVGIDLVAMCVNDIVVQGAEPLFFLDYMATGKLTPEKAQDVVKGISEGCIQAGCALIGGETAEMPGFYGEGEYDLAGFTVGIVDNTSIIDGSGITVGDRLIGLASSGLHSNGYSLARKVLFEHLGLNADSKVEELDLSVGEELLKPTRIYVKTILNLLRDFQIKGMAHITGGGLVENVPRMMPKNCQAIIHKDSWPKPPIFELLRKAGNIEEEEMYRTLNYGIGMVLVVPETEAEEIMVRLSGLKEDAFIIGEIAKSAEEGEPTVTLI.

Belongs to the AIR synthase family.

The protein resides in the cytoplasm. It carries out the reaction 2-formamido-N(1)-(5-O-phospho-beta-D-ribosyl)acetamidine + ATP = 5-amino-1-(5-phospho-beta-D-ribosyl)imidazole + ADP + phosphate + H(+). Its pathway is purine metabolism; IMP biosynthesis via de novo pathway; 5-amino-1-(5-phospho-D-ribosyl)imidazole from N(2)-formyl-N(1)-(5-phospho-D-ribosyl)glycinamide: step 2/2. This chain is Phosphoribosylformylglycinamidine cyclo-ligase, found in Syntrophotalea carbinolica (strain DSM 2380 / NBRC 103641 / GraBd1) (Pelobacter carbinolicus).